We begin with the raw amino-acid sequence, 110 residues long: Ribonuclease H2 subunit C (110 aa).

Positions 45-69 (LKREKSATPSSSDNTTSNTFSNGAI) are disordered. A compositionally biased stretch (low complexity) spans 51 to 66 (ATPSSSDNTTSNTFSN).

This sequence belongs to the RNase H2 subunit C family. Highly divergent. In terms of assembly, the RNase 2 complex is a heterotrimer composed of the catalytic subunit RNH201 and of the non-catalytic subunits RNH202 and RNH203.

It is found in the cytoplasm. Its subcellular location is the nucleus. In terms of biological role, non catalytic subunit of RNase H2, an endonuclease that specifically degrades the RNA of RNA:DNA hybrids. Participates in DNA replication, possibly by mediating the removal of lagging-strand Okazaki fragment RNA primers during DNA replication. Mediates the excision of single ribonucleotides from DNA:RNA duplexes. The chain is Ribonuclease H2 subunit C (RNH203) from Saccharomyces cerevisiae (strain ATCC 204508 / S288c) (Baker's yeast).